Reading from the N-terminus, the 338-residue chain is Anthranilate phosphoribosyltransferase (338 aa).

5-phospho-alpha-D-ribose 1-diphosphate contacts are provided by residues Gly-81, 84–85 (GD), Thr-89, 91–94 (NVST), 109–117 (KHGNRSVSS), and Ser-121. Gly-81 is an anthranilate binding site. Ser-93 lines the Mg(2+) pocket. Asn-112 is a binding site for anthranilate. Arg-167 lines the anthranilate pocket. Mg(2+) contacts are provided by Asp-226 and Glu-227.

Belongs to the anthranilate phosphoribosyltransferase family. Homodimer. Mg(2+) is required as a cofactor.

It catalyses the reaction N-(5-phospho-beta-D-ribosyl)anthranilate + diphosphate = 5-phospho-alpha-D-ribose 1-diphosphate + anthranilate. It functions in the pathway amino-acid biosynthesis; L-tryptophan biosynthesis; L-tryptophan from chorismate: step 2/5. Its function is as follows. Catalyzes the transfer of the phosphoribosyl group of 5-phosphorylribose-1-pyrophosphate (PRPP) to anthranilate to yield N-(5'-phosphoribosyl)-anthranilate (PRA). This chain is Anthranilate phosphoribosyltransferase, found in Alkalilimnicola ehrlichii (strain ATCC BAA-1101 / DSM 17681 / MLHE-1).